A 469-amino-acid polypeptide reads, in one-letter code: Uridine kinase-like protein 4 (469 aa).

The uridine kinase stretch occupies residues 46 to 249; sequence QRQPFVIGVA…IVQHICTKLG (204 aa). Positions 259–469 are uracil phosphoribosyltransferase; the sequence is NLYVIHSTFQ…GDRYFGTDDD (211 aa). Residues Lys-283, Arg-292, and 326–329 each bind GTP; that span reads CKRL. Positions 336 and 361 each coordinate 5-phospho-alpha-D-ribose 1-diphosphate. Arg-381 contacts GTP. Residues Asp-387, 392–395, and Glu-458 each bind 5-phospho-alpha-D-ribose 1-diphosphate; that span reads TGNS. 457 to 459 is a binding site for uracil; that stretch reads GEF.

This sequence in the N-terminal section; belongs to the uridine kinase family. The protein in the C-terminal section; belongs to the UPRTase family. Requires Mg(2+) as cofactor.

The enzyme catalyses UMP + diphosphate = 5-phospho-alpha-D-ribose 1-diphosphate + uracil. It carries out the reaction cytidine + ATP = CMP + ADP + H(+). It catalyses the reaction uridine + ATP = UMP + ADP + H(+). It participates in pyrimidine metabolism; UMP biosynthesis via salvage pathway; UMP from uracil: step 1/1. It functions in the pathway pyrimidine metabolism; CTP biosynthesis via salvage pathway; CTP from cytidine: step 1/3. Its pathway is pyrimidine metabolism; UMP biosynthesis via salvage pathway; UMP from uridine: step 1/1. With respect to regulation, allosterically activated by GTP. Functionally, involved in the pyrimidine salvage pathway. The uracil phosphoribosyltransferase (UPRT) activity, that catalyzes the conversion of uracil and 5-phospho-alpha-D-ribose 1-diphosphate (PRPP) to UMP and diphosphate, is unsure. This chain is Uridine kinase-like protein 4 (UKL4), found in Arabidopsis thaliana (Mouse-ear cress).